The sequence spans 800 residues: DNA topoisomerase 1 (800 aa).

One can recognise a Toprim domain in the interval 1–111; that stretch reads MKLVIVESPA…VKSDDFFKRV (111 aa). 2 residues coordinate Mg(2+): Glu7 and Asp80. The 437-residue stretch at 132–568 folds into the Topo IA-type catalytic domain; that stretch reads DNNLVNAQQA…FWNGFNHNIE (437 aa). An interaction with DNA region spans residues 166 to 171; that stretch reads SAGRVQ. Catalysis depends on Tyr304, which acts as the O-(5'-phospho-DNA)-tyrosine intermediate. A C4-type zinc finger spans residues 600 to 627; that stretch reads CPSCKTGELSLKLGKFGAFLACSNYPEC.

The protein belongs to the type IA topoisomerase family. As to quaternary structure, monomer. Requires Mg(2+) as cofactor.

The catalysed reaction is ATP-independent breakage of single-stranded DNA, followed by passage and rejoining.. Its function is as follows. Releases the supercoiling and torsional tension of DNA, which is introduced during the DNA replication and transcription, by transiently cleaving and rejoining one strand of the DNA duplex. Introduces a single-strand break via transesterification at a target site in duplex DNA. The scissile phosphodiester is attacked by the catalytic tyrosine of the enzyme, resulting in the formation of a DNA-(5'-phosphotyrosyl)-enzyme intermediate and the expulsion of a 3'-OH DNA strand. The free DNA strand then undergoes passage around the unbroken strand, thus removing DNA supercoils. Finally, in the religation step, the DNA 3'-OH attacks the covalent intermediate to expel the active-site tyrosine and restore the DNA phosphodiester backbone. The protein is DNA topoisomerase 1 of Rickettsia bellii (strain RML369-C).